Reading from the N-terminus, the 1826-residue chain is 1,3-beta-glucan synthase component bgs3 (1826 aa).

Residues 34-43 (QSNDQYNNIQ) are compositionally biased toward polar residues. Positions 34 to 90 (QSNDQYNNIQHPAPSFANPFIHEQDDSYSDILEEEPDEDAYDSPERPSSTEEFISQD) are disordered. Residues 59–75 (DSYSDILEEEPDEDAYD) show a composition bias toward acidic residues. 7 consecutive transmembrane segments (helical) span residues 427–447 (IWIL…PTIY), 465–485 (WCAP…ALIL), 504–524 (LIFV…IFGF), 543–563 (FFFS…FLLG), 597–617 (AALW…FLTL), 637–657 (FMIG…LVYL), and 660–680 (LVLF…MFSI). The residue at position 885 (S885) is a Phosphoserine. 11 consecutive transmembrane segments (helical) span residues 1272-1292 (VFIM…GAMY), 1329-1349 (IISI…HDLL), 1375-1397 (VTQN…YIAT), 1417-1437 (GSSI…TMTV), 1438-1458 (WTTH…CPFI), 1531-1551 (IFTE…AYTF), 1571-1591 (IWIM…ILLM), 1607-1627 (YGAV…VFTF), 1642-1662 (VLGC…VVVF), 1701-1721 (CKVV…CILF), and 1770-1790 (SLLF…PLVL).

This sequence belongs to the glycosyltransferase 48 family. In terms of assembly, component of the 1,3-beta-glucan synthase (GS) complex, composed of at least the alternate catalytic subunits bgs1, bgs2, bgs3, and bgs4, and a regulatory subunit chr4.

It localises to the membrane. The catalysed reaction is [(1-&gt;3)-beta-D-glucosyl](n) + UDP-alpha-D-glucose = [(1-&gt;3)-beta-D-glucosyl](n+1) + UDP + H(+). In terms of biological role, alternate catalytic subunit of the 1,3-beta-glucan synthase (GS) complex. Synthesizes 1,3-beta-glucan, a major structural component of the yeast cell wall. Required for cell wall biosynthesis and cell elongation. In Schizosaccharomyces pombe (strain 972 / ATCC 24843) (Fission yeast), this protein is 1,3-beta-glucan synthase component bgs3.